Reading from the N-terminus, the 230-residue chain is Potassium/proton antiporter CemA (230 aa).

A run of 4 helical transmembrane segments spans residues 7–27 (LPSLLYLVFIVLLPWGVSFSF), 106–126 (IILHFSTNIICLAILSGFFFL), 145–165 (LNDSIKAFFILLVTDFFVGFH), and 181–201 (LGWAPNELIFTIFVCSFPVIL).

The protein belongs to the CemA family.

The protein resides in the plastid. Its subcellular location is the chloroplast inner membrane. It carries out the reaction K(+)(in) + H(+)(out) = K(+)(out) + H(+)(in). Contributes to K(+)/H(+) antiport activity by supporting proton efflux to control proton extrusion and homeostasis in chloroplasts in a light-dependent manner to modulate photosynthesis. Prevents excessive induction of non-photochemical quenching (NPQ) under continuous-light conditions. Indirectly promotes efficient inorganic carbon uptake into chloroplasts. The protein is Potassium/proton antiporter CemA of Lolium perenne (Perennial ryegrass).